A 153-amino-acid polypeptide reads, in one-letter code: ATP synthase subunit b' (153 aa).

A helical transmembrane segment spans residues 23–40 (LMAIQVVALTYILNSLFF).

Belongs to the ATPase B chain family. F-type ATPases have 2 components, F(1) - the catalytic core - and F(0) - the membrane proton channel. F(1) has five subunits: alpha(3), beta(3), gamma(1), delta(1), epsilon(1). F(0) has four main subunits: a(1), b(1), b'(1) and c(10-14). The alpha and beta chains form an alternating ring which encloses part of the gamma chain. F(1) is attached to F(0) by a central stalk formed by the gamma and epsilon chains, while a peripheral stalk is formed by the delta, b and b' chains.

The protein localises to the cellular thylakoid membrane. Functionally, f(1)F(0) ATP synthase produces ATP from ADP in the presence of a proton or sodium gradient. F-type ATPases consist of two structural domains, F(1) containing the extramembraneous catalytic core and F(0) containing the membrane proton channel, linked together by a central stalk and a peripheral stalk. During catalysis, ATP synthesis in the catalytic domain of F(1) is coupled via a rotary mechanism of the central stalk subunits to proton translocation. In terms of biological role, component of the F(0) channel, it forms part of the peripheral stalk, linking F(1) to F(0). The b'-subunit is a diverged and duplicated form of b found in plants and photosynthetic bacteria. The protein is ATP synthase subunit b' of Prochlorococcus marinus (strain MIT 9312).